The chain runs to 299 residues: Probable phosphate butyryltransferase (299 aa).

It belongs to the phosphate acetyltransferase and butyryltransferase family.

It catalyses the reaction butanoyl-CoA + phosphate = butanoyl phosphate + CoA. Catalyzes the conversion of butyryl-CoA through butyryl phosphate to butyrate. This chain is Probable phosphate butyryltransferase (yqiS), found in Bacillus subtilis (strain 168).